Consider the following 503-residue polypeptide: Protein ERGIC-53-like (503 aa).

Positions 1 to 25 (MLKTGGLSPSLCLLSLLLALHSAER) are cleaved as a signal peptide. At 26-439 (SYPPPQRRFE…WLPGFSTCLR (414 aa)) the chain is on the lumenal side. An L-type lectin-like domain is found at 32–253 (RRFEYKLSFK…DVLSFLTFSL (222 aa)). An intrachain disulfide couples Cys177 to Cys216. Residues 440 to 460 (TSIFLFFLLIQTVGFFCYMNF) traverse the membrane as a helical segment. At 461–503 (RQELDKRLQEYLFTESISLQPALPIPRTIGVLRRQPVSPSMQA) the chain is on the cytoplasmic side.

As to expression, predominantly expressed in the sublingual salivary gland, in the mucous cells of the acini, but not in the serous cells, nor in the duct system (at protein level). Not detected in the submandilar, nor the parotid glands. Expressed in the mucous glands, but not detected in the serous glands (at protein level). Besides the salivary glands, expressed in the Brunner's glands in the duodenum, but no other mucous or serous glands (at protein level).

Its subcellular location is the endoplasmic reticulum-Golgi intermediate compartment membrane. This Rattus norvegicus (Rat) protein is Protein ERGIC-53-like (Lman1l).